Consider the following 480-residue polypeptide: Gamma-aminobutyric acid receptor subunit rho-1 (480 aa).

An N-terminal signal peptide occupies residues 1 to 21 (MLAVRNMKFGIFLLWWGWVLA). Over 22–281 (AESTVHWPGR…LYINFTLRRH (260 aa)) the chain is Extracellular. The disordered stretch occupies residues 31 to 67 (REVHEPSKKGSRPQRQRRGAHDDAHKQGSPILKRSSD). A compositionally biased stretch (basic residues) spans 39–48 (KGSRPQRQRR). Arg-126 contributes to the 4-aminobutanoate binding site. N-linked (GlcNAc...) asparagine glycosylation occurs at Asn-141. Ser-190 provides a ligand contact to 4-aminobutanoate. An intrachain disulfide couples Cys-199 to Cys-213. Glu-218 provides a ligand contact to 4-aminobutanoate. Residues Asn-235 and Asn-275 are each glycosylated (N-linked (GlcNAc...) asparagine). Residues 282 to 302 (IFFFLLQTYFPATLMVMLSWV) traverse the membrane as a helical segment. Over 303-314 (SFWIDRRAVPAR) the chain is Cytoplasmic. Residues 315-335 (VPLGITTVLTMSTIITGVNAS) form a helical membrane-spanning segment. Over 336–346 (MPRVSYIKAVD) the chain is Extracellular. Residues 347–367 (IYLWVSFVFVFLSVLEYAAVN) traverse the membrane as a helical segment. Topologically, residues 368–458 (YLTTVQERKE…MRINTHAIDK (91 aa)) are cytoplasmic. A helical transmembrane segment spans residues 459 to 479 (YSRIIFPAAYILFNLIYWSIF). A topological domain (extracellular) is located at residue Ser-480.

The protein belongs to the ligand-gated ion channel (TC 1.A.9) family. Gamma-aminobutyric acid receptor (TC 1.A.9.5) subfamily. GABRR1 sub-subfamily. Three rho subunits (rho-1/GBRR1, rho-2/GBRR2 and rho-3/GBRR3) coassemble either to form functional homopentamers or heteropentamers. Rho-1/GBRR1 subunits can also associate with alpha-1/GBRA1 subunits to form a functional GABAAR. Interacts with SQSTM1.

The protein resides in the postsynaptic cell membrane. It is found in the cell membrane. The enzyme catalyses chloride(in) = chloride(out). Inhibited by TPMPA, a rho-specific antagonist. Inhibited by picrotoxin, when forming a homopentamer. In contrast with other GABAARs, rho-1 GABAAR is not inhibited by bicuculline, when forming a homopentamer. Down-regulated by external protons when forming a homopentamer. Its function is as follows. Rho subunit of the pentameric ligand-gated chloride channels responsible for mediating the effects of gamma-aminobutyric acid (GABA), the major inhibitory neurotransmitter in the brain. Rho-containing GABA-gated chloride channels are a subclass of GABA(A) receptors (GABAARs) entirely composed of rho subunits, where GABA molecules bind at the rho intersubunit interfaces. When activated by GABA, rho-GABAARs selectively allow the flow of chloride anions across the cell membrane down their electrochemical gradient. Rho-1 subunits are primarily expressed in retina where rho-1-containing GABAARs may play a role in retinal neurotransmission. Rho-1 GABAARs are also involved in neuronal tonic (extrasynaptic) and phasic (synaptic) transmission in the Purkinje neurons of the cerebellum. Rho-1 GABAARs may also contribute to the regulation of glial development in the cerebellum by controlling extrasynaptic transmission. This chain is Gamma-aminobutyric acid receptor subunit rho-1, found in Rattus norvegicus (Rat).